A 1224-amino-acid chain; its full sequence is uncharacterized protein (1224 aa).

Disordered regions lie at residues 1 to 67 (MNQD…SSSI), 111 to 151 (QQSH…PPPL), 193 to 270 (QTEL…DPNI), 316 to 416 (DYNN…TVKK), 430 to 957 (SDSG…QEEK), and 1078 to 1167 (SFLP…TSHV). Residues 10–48 (SFHSNNNSNSNHHHSYNNSINSGSSSSGSNNSSNNNSFN) are compositionally biased toward low complexity. Residues 49–58 (DEIEGGEIQE) show a composition bias toward acidic residues. 3 stretches are compositionally biased toward low complexity: residues 126-140 (SSSS…SSSS), 193-212 (QTEL…SSPP), and 228-241 (SAPT…SVSS). Over residues 242–255 (LTQPQKPKSVQYSQ) the composition is skewed to polar residues. The segment covering 260–270 (EIREEKVDPNI) has biased composition (basic and acidic residues). A compositionally biased stretch (low complexity) spans 316 to 338 (DYNNSNSNNSNNNNNNNNSITEN). The segment covering 341-353 (DKMINNQPSSTNS) has biased composition (polar residues). 2 stretches are compositionally biased toward low complexity: residues 379–413 (TTTT…TTPT) and 430–450 (SDSG…TSTP). Basic and acidic residues-rich tracts occupy residues 451–585 (KSKD…DKKK) and 630–646 (EIDK…KVES). Residues 662-719 (TTTTTTSTSSSSSLPSLSSSSSSLPLPSSSSSSSSSSSSSSSSSSSSSSSSSSSTTST) show a composition bias toward low complexity. Positions 727–750 (PPPPPQQPPPPPPQQPPPPPPPIN) are enriched in pro residues. A compositionally biased stretch (basic and acidic residues) spans 755–892 (SEHDKKIIEK…SDRDRDRKDS (138 aa)). The span at 893–933 (NSNNNSNNNNNNNNNNNNNNNNNNNNKKDNNNNNNNNNNNN) shows a compositional bias: low complexity. A compositionally biased stretch (basic and acidic residues) spans 948-957 (TPKKTKQEEK). Residues 950–991 (KKTKQEEKLIRSQIDQIKEDAKDLKKLAKELQSKNQNECLEM) adopt a coiled-coil conformation. Low complexity-rich tracts occupy residues 1078-1108 (SFLP…TAPL) and 1114-1165 (NPSE…PNTS).

This is an uncharacterized protein from Dictyostelium discoideum (Social amoeba).